Reading from the N-terminus, the 386-residue chain is Magnesium transporter MRS2-7 (386 aa).

The next 2 helical transmembrane spans lie at 321-341 and 355-375; these read LMLSAGTVCVSVYSMIAGIFG and IFKWVVSLTGTFCIVLFVIIL. The Required for magnesium transport activity signature appears at 341–343; it reads GMN.

Belongs to the CorA metal ion transporter (MIT) (TC 1.A.35.5) family. Isoform 1 is expressed in the whole plant. Isoform 4 is expressed only in roots and flowers.

The protein resides in the endoplasmic reticulum membrane. Its function is as follows. Low-affinity magnesium transporter that mediates the influx of magnesium. The chain is Magnesium transporter MRS2-7 (MRS2-7) from Arabidopsis thaliana (Mouse-ear cress).